The sequence spans 183 residues: Ribose 1,5-bisphosphate phosphokinase PhnN (183 aa).

The protein belongs to the ribose 1,5-bisphosphokinase family.

The enzyme catalyses alpha-D-ribose 1,5-bisphosphate + ATP = 5-phospho-alpha-D-ribose 1-diphosphate + ADP. It participates in metabolic intermediate biosynthesis; 5-phospho-alpha-D-ribose 1-diphosphate biosynthesis; 5-phospho-alpha-D-ribose 1-diphosphate from D-ribose 5-phosphate (route II): step 3/3. Functionally, catalyzes the phosphorylation of ribose 1,5-bisphosphate to 5-phospho-D-ribosyl alpha-1-diphosphate (PRPP). The chain is Ribose 1,5-bisphosphate phosphokinase PhnN from Azotobacter vinelandii (strain DJ / ATCC BAA-1303).